Reading from the N-terminus, the 504-residue chain is MSLICSISNEVPEHPCVSPVSNHVYERRLIEKYIAENGTDPINNQPLSEEQLIDIKVAHPIRPKPPSATSIPAILKALQDEWDAVMLHSFTLRQQLQTTRQELSHALYQHDAACRVIARLTKEVTAAREALATLKPQAGLIVPQAVPSSQPSVVGAGEPMDLGELVGMTPEIIQKLQDKATVLTTERKKRGKTVPEELVKPEELSKYRQVASHVGLHSASIPGILALDLCPSDTNKILTGGADKNVVVFDKSSEQILATLKGHTKKVTSVVFHPSQELVFSASPDATIRIWSVPNASCVQVVRAHESAVTGLSLHATGDYLLSSSDDQYWAFSDIQTGRVLTKVTDETSGCSLTCAQFHPDGLIFGTGTMDSQIKIWDLKERTNVANFPGHSGPITSIAFSENGYYLATAADDSSVKLWDLRKLKNFKTLQLDNNFEVKSLIFDQSGTYLALGGTDVQIYICKQWTEILHFTEHSGLTTGVAFGHHAKFIASTGMDRSLKFYSL.

N-acetylserine is present on Ser2. A U-box domain is found at Ser2 to Ala73. The segment at Ala68–Gly223 is may mediate interaction with PSMC5. 4 positions are modified to N6-acetyllysine: Lys122, Lys179, Lys244, and Lys261. Residues Ala219–Thr259 form a WD 1 repeat. WD repeat units lie at residues Gly262–Val301, Ala304–Thr345, Thr348–Asn387, Gly390–Thr429, Asp433–Thr472, and Glu473–Ser503.

The protein belongs to the WD repeat PRP19 family. As to quaternary structure, homotetramer. Component of activated, catalytic and post-catalytic spliceosomes. Component of the Prp19 complex/PRP19C/Nineteen complex/NTC and related complexes described as PRP19-CDC5L splicing complex and PSO4 complex. A homotetramer of PRPF19, CDC5L, PLRG1 and BCAS2 constitute the core of those complexes. The interaction with CDC5L, PLRG1 and BCAS2 is direct within this core complex. At least three less stably associated proteins CTNNBL1, CWC15 and HSPA8 are found in the Prp19 complex. The Prp19 complex associates with the spliceosome during its assembly and remodeling recruiting additional proteins. Component of the XAB2 complex, a multimeric protein complex composed of XAB2, PRPF19, AQR, ZNF830, ISY1, and PPIE. Interacts with CWC22 and EIF4A3 in an RNA-independent manner. Interacts with RPA1 and RPA2; the PRP19-CDC5L complex is recruited to the sites of DNA repair where it interacts with the replication protein A complex (RPA). Interacts with SETMAR; required for SETMAR recruitment to site of DNA damage. Interacts with U2AF2; the interaction is direct and recruits the Prp19 complex to RNA polymerase II C-terminal domain (CTD) and the pre-mRNA. Interacts with PRPF3. Interacts with APEX1, DNTT and PSMB4. Interacts with PSMC5. Interacts with KNSTRN. Interacts (via N-terminus) with CDC5L. Interacts with KHDC4. Interacts with USB1. Interacts with DDX41.

The protein localises to the nucleus. It localises to the nucleoplasm. The protein resides in the cytoplasm. Its subcellular location is the cytoskeleton. It is found in the spindle. The protein localises to the lipid droplet. It carries out the reaction S-ubiquitinyl-[E2 ubiquitin-conjugating enzyme]-L-cysteine + [acceptor protein]-L-lysine = [E2 ubiquitin-conjugating enzyme]-L-cysteine + N(6)-ubiquitinyl-[acceptor protein]-L-lysine.. It functions in the pathway protein modification; protein ubiquitination. Its function is as follows. Ubiquitin-protein ligase which is a core component of several complexes mainly involved pre-mRNA splicing and DNA repair. Required for pre-mRNA splicing as component of the spliceosome. Core component of the PRP19C/Prp19 complex/NTC/Nineteen complex which is part of the spliceosome and participates in its assembly, its remodeling and is required for its activity. During assembly of the spliceosome, mediates 'Lys-63'-linked polyubiquitination of the U4 spliceosomal protein PRPF3. Ubiquitination of PRPF3 allows its recognition by the U5 component PRPF8 and stabilizes the U4/U5/U6 tri-snRNP spliceosomal complex. Recruited to RNA polymerase II C-terminal domain (CTD) and the pre-mRNA, it may also couple the transcriptional and spliceosomal machineries. The XAB2 complex, which contains PRPF19, is also involved in pre-mRNA splicing, transcription and transcription-coupled repair. Beside its role in pre-mRNA splicing PRPF19, as part of the PRP19-CDC5L complex, plays a role in the DNA damage response/DDR. It is recruited to the sites of DNA damage by the RPA complex where PRPF19 directly ubiquitinates RPA1 and RPA2. 'Lys-63'-linked polyubiquitination of the RPA complex allows the recruitment of the ATR-ATRIP complex and the activation of ATR, a master regulator of the DNA damage response. May also play a role in DNA double-strand break (DSB) repair by recruiting the repair factor SETMAR to altered DNA. As part of the PSO4 complex may also be involved in the DNA interstrand cross-links/ICLs repair process. In addition, may also mediate 'Lys-48'-linked polyubiquitination of substrates and play a role in proteasomal degradation. May play a role in the biogenesis of lipid droplets. May play a role in neural differentiation possibly through its function as part of the spliceosome. The chain is Pre-mRNA-processing factor 19 (PRPF19) from Bos taurus (Bovine).